A 258-amino-acid polypeptide reads, in one-letter code: UPF0246 protein ABO_1338 (258 aa).

It belongs to the UPF0246 family.

The sequence is that of UPF0246 protein ABO_1338 from Alcanivorax borkumensis (strain ATCC 700651 / DSM 11573 / NCIMB 13689 / SK2).